The primary structure comprises 498 residues: Histone-lysine N-methyltransferase SET5 (498 aa).

A disordered region spans residues 68–94 (KPNDGCTSRSTSCPGGKKKKKSKTDTS). The SET domain maps to 108-415 (AGIRGVYFDP…PDDELVISYI (308 aa)).

The protein belongs to the class V-like SAM-binding methyltransferase superfamily. Histone-lysine methyltransferase family. SET5 subfamily.

Its subcellular location is the nucleus. It localises to the chromosome. It is found in the cytoplasm. The enzyme catalyses L-lysyl-[histone] + S-adenosyl-L-methionine = N(6)-methyl-L-lysyl-[histone] + S-adenosyl-L-homocysteine + H(+). In terms of biological role, histone methyltransferase that monomethylates 'Lys-5', 'Lys-8' and 'Lys-12' of histone H4 (H4K5me1, H4K8me1 and H4K12me1, respectively), thereby controlling gene expression and remodeling chromatin structures. The sequence is that of Histone-lysine N-methyltransferase SET5 (SET5) from Mycosarcoma maydis (Corn smut fungus).